Consider the following 291-residue polypeptide: MTTLAIDIGGTKLAAALIGADGQIRDRRELPTPASQTPEALRDALSALVSPLQVHAQRVAIASTGIIRDGSLLALNPHNLGGLLHFPLVKTLEQLTDLPTIAINDAQAAAWAEYQALEGDITEMVFITVSTGVGGGVVSGGKLLTGPGGLAGHIGHTLADPHGPVCGCGRTGCVEAIASGRGIAAAAQGELAGANAKTIFTHAGQGDEQAQQLIHRSARTLARLIADIKATTDCQCVVVGGSVGLAEGYLALVETYLAQEPAAFHVDLLAAHYRHDAGLLGAALLAQGEKL.

ATP is bound by residues 5-12 and 132-139; these read AIDIGGTK and GVGGGVVS. Zn(2+) contacts are provided by histidine 156, cysteine 166, cysteine 168, and cysteine 173.

This sequence belongs to the ROK (NagC/XylR) family. NanK subfamily. In terms of assembly, homodimer.

The enzyme catalyses an N-acyl-D-mannosamine + ATP = an N-acyl-D-mannosamine 6-phosphate + ADP + H(+). The protein operates within amino-sugar metabolism; N-acetylneuraminate degradation; D-fructose 6-phosphate from N-acetylneuraminate: step 2/5. Catalyzes the phosphorylation of N-acetylmannosamine (ManNAc) to ManNAc-6-P. The sequence is that of N-acetylmannosamine kinase from Escherichia coli (strain SMS-3-5 / SECEC).